Here is a 59-residue protein sequence, read N- to C-terminus: Venom protein 27.7 (59 aa).

The signal sequence occupies residues 1–29 (MTFITLTIGLSLRTIFLIFIFLPPPHLLA).

The protein belongs to the non-disulfide-bridged peptide (NDBP) superfamily. Expressed by the venom gland.

Its subcellular location is the secreted. In Lychas mucronatus (Chinese swimming scorpion), this protein is Venom protein 27.7.